The following is a 735-amino-acid chain: Protostadienol synthase A (735 aa).

Residues 129–170 (KNEMIRYLLNFVNEDGGWGLWINSPSTVFGTTMNYTMLRILG) form a PFTB 1 repeat. Asp-460 acts as the Proton donor in catalysis. PFTB repeat units follow at residues 487 to 528 (LAEA…YDNV), 564 to 604 (MARC…ETVG), and 613 to 660 (CRNA…ALMG).

It belongs to the terpene cyclase/mutase family.

It catalyses the reaction (S)-2,3-epoxysqualene = (17Z)-protosta-17(20),24-dien-3beta-ol. Functionally, protostadienol synthase which cyclizes (3S)-oxidosqualene to (17Z)-protosta-17(20),24-dien-3-beta-ol (protostadienol), the biosynthetic precursor of helvolic acid, a secondary metabolite which promotes virulence. The polypeptide is Protostadienol synthase A (PDSA) (Arthroderma gypseum (strain ATCC MYA-4604 / CBS 118893) (Microsporum gypseum)).